Reading from the N-terminus, the 170-residue chain is ATP synthase subunit b (170 aa).

Residues 22 to 41 (VLNWAVVVFGLYKFLPGFLG) form a helical membrane-spanning segment.

The protein belongs to the ATPase B chain family. As to quaternary structure, F-type ATPases have 2 components, F(1) - the catalytic core - and F(0) - the membrane proton channel. F(1) has five subunits: alpha(3), beta(3), gamma(1), delta(1), epsilon(1). F(0) has four main subunits: a(1), b(1), b'(1) and c(10-14). The alpha and beta chains form an alternating ring which encloses part of the gamma chain. F(1) is attached to F(0) by a central stalk formed by the gamma and epsilon chains, while a peripheral stalk is formed by the delta, b and b' chains.

It is found in the cellular thylakoid membrane. Its function is as follows. F(1)F(0) ATP synthase produces ATP from ADP in the presence of a proton or sodium gradient. F-type ATPases consist of two structural domains, F(1) containing the extramembraneous catalytic core and F(0) containing the membrane proton channel, linked together by a central stalk and a peripheral stalk. During catalysis, ATP synthesis in the catalytic domain of F(1) is coupled via a rotary mechanism of the central stalk subunits to proton translocation. Functionally, component of the F(0) channel, it forms part of the peripheral stalk, linking F(1) to F(0). The sequence is that of ATP synthase subunit b from Prochlorococcus marinus subsp. pastoris (strain CCMP1986 / NIES-2087 / MED4).